Here is a 261-residue protein sequence, read N- to C-terminus: uncharacterized protein (261 aa).

Belongs to the BtpA family.

This is an uncharacterized protein from Thermococcus kodakarensis (strain ATCC BAA-918 / JCM 12380 / KOD1) (Pyrococcus kodakaraensis (strain KOD1)).